A 381-amino-acid polypeptide reads, in one-letter code: Subtilisin J (381 aa).

Positions 1–29 (MRSKKLWISLLFALTLIFTMAFSNMSVQA) are cleaved as a signal peptide. Residues 30–106 (AGKSSTEKKY…VEEDHIAHEY (77 aa)) constitute a propeptide that is removed on maturation. Positions 38–103 (KYIVGFKQTM…VAYVEEDHIA (66 aa)) constitute an Inhibitor I9 domain. Position 108 (glutamine 108) interacts with Ca(2+). The 270-residue stretch at 111-380 (PYGISQIKAP…KGLINVQAAA (270 aa)) folds into the Peptidase S8 domain. Aspartate 138 (charge relay system) is an active-site residue. Aspartate 147 provides a ligand contact to Ca(2+). Catalysis depends on histidine 170, which acts as the Charge relay system. Ca(2+) contacts are provided by leucine 181, asparagine 183, isoleucine 185, valine 187, alanine 275, tyrosine 277, and threonine 280. Serine 327 serves as the catalytic Charge relay system.

The protein belongs to the peptidase S8 family. Ca(2+) serves as cofactor.

Its subcellular location is the secreted. It carries out the reaction Hydrolysis of proteins with broad specificity for peptide bonds, and a preference for a large uncharged residue in P1. Hydrolyzes peptide amides.. Functionally, subtilisin is an extracellular alkaline serine protease, it catalyzes the hydrolysis of proteins and peptide amides. The polypeptide is Subtilisin J (aprJ) (Geobacillus stearothermophilus (Bacillus stearothermophilus)).